A 159-amino-acid polypeptide reads, in one-letter code: Regulatory protein RecX (159 aa).

The protein belongs to the RecX family.

Its subcellular location is the cytoplasm. Functionally, modulates RecA activity. The chain is Regulatory protein RecX from Acinetobacter baylyi (strain ATCC 33305 / BD413 / ADP1).